The sequence spans 172 residues: 3-hydroxydecanoyl-[acyl-carrier-protein] dehydratase (172 aa).

Residue H71 is part of the active site.

This sequence belongs to the thioester dehydratase family. FabA subfamily. In terms of assembly, homodimer.

The protein localises to the cytoplasm. The enzyme catalyses a (3R)-hydroxyacyl-[ACP] = a (2E)-enoyl-[ACP] + H2O. It catalyses the reaction (3R)-hydroxydecanoyl-[ACP] = (2E)-decenoyl-[ACP] + H2O. The catalysed reaction is (2E)-decenoyl-[ACP] = (3Z)-decenoyl-[ACP]. It participates in lipid metabolism; fatty acid biosynthesis. Functionally, necessary for the introduction of cis unsaturation into fatty acids. Catalyzes the dehydration of (3R)-3-hydroxydecanoyl-ACP to E-(2)-decenoyl-ACP and then its isomerization to Z-(3)-decenoyl-ACP. Can catalyze the dehydratase reaction for beta-hydroxyacyl-ACPs with saturated chain lengths up to 16:0, being most active on intermediate chain length. The polypeptide is 3-hydroxydecanoyl-[acyl-carrier-protein] dehydratase (Photorhabdus laumondii subsp. laumondii (strain DSM 15139 / CIP 105565 / TT01) (Photorhabdus luminescens subsp. laumondii)).